A 328-amino-acid polypeptide reads, in one-letter code: D-cysteine desulfhydrase (328 aa).

Lys51 carries the post-translational modification N6-(pyridoxal phosphate)lysine.

The protein belongs to the ACC deaminase/D-cysteine desulfhydrase family. As to quaternary structure, homodimer. Requires pyridoxal 5'-phosphate as cofactor.

The enzyme catalyses D-cysteine + H2O = hydrogen sulfide + pyruvate + NH4(+) + H(+). In terms of biological role, catalyzes the alpha,beta-elimination reaction of D-cysteine and of several D-cysteine derivatives. It could be a defense mechanism against D-cysteine. The sequence is that of D-cysteine desulfhydrase from Klebsiella pneumoniae subsp. pneumoniae (strain ATCC 700721 / MGH 78578).